The following is a 1372-amino-acid chain: DNA-directed RNA polymerase subunit beta (1372 aa).

Belongs to the RNA polymerase beta chain family. In terms of assembly, the RNAP catalytic core consists of 2 alpha, 1 beta, 1 beta' and 1 omega subunit. When a sigma factor is associated with the core the holoenzyme is formed, which can initiate transcription.

The catalysed reaction is RNA(n) + a ribonucleoside 5'-triphosphate = RNA(n+1) + diphosphate. Its function is as follows. DNA-dependent RNA polymerase catalyzes the transcription of DNA into RNA using the four ribonucleoside triphosphates as substrates. This Bradyrhizobium sp. (strain BTAi1 / ATCC BAA-1182) protein is DNA-directed RNA polymerase subunit beta.